We begin with the raw amino-acid sequence, 298 residues long: (S)-ureidoglycine aminohydrolase (298 aa).

A signal peptide spans 1–20 (MRSLYLIVFIVISLVKASKS). Residues 222–288 (TMDFQPGEFL…ALGKTRSRYL (67 aa)) enclose the Cupin type-2 domain. Mn(2+)-binding residues include E235, H237, H241, and Q275. E235 contributes to the substrate binding site. Residues Q275, Y287, and K291 each contribute to the substrate site.

The protein belongs to the UGHY family. In terms of assembly, homooctamer. Requires Mn(2+) as cofactor.

The protein localises to the endoplasmic reticulum. It catalyses the reaction (S)-2-ureidoglycine + H2O = (S)-ureidoglycolate + NH4(+). In terms of biological role, involved in the catabolism of purine nucleotides. Can use (S)-2-ureidoglycine as substrate, but not allantoate. The sequential activity of AAH, UGLYAH and UAH allows a complete purine breakdown without the intermediate generation of urea. This chain is (S)-ureidoglycine aminohydrolase (UGLYAH), found in Arabidopsis thaliana (Mouse-ear cress).